The sequence spans 537 residues: 5,6-dihydroxyindole-2-carboxylic acid oxidase (537 aa).

Positions 1-24 (MKSYNVLPLAYISLFLMLFYQVWA) are cleaved as a signal peptide. Over 25 to 477 (QFPRECANIE…WPGQEFTVSE (453 aa)) the chain is Lumenal, melanosome. 5 disulfides stabilise this stretch: Cys-30–Cys-41, Cys-42–Cys-65, Cys-56–Cys-99, Cys-101–Cys-110, and Cys-113–Cys-122. Asn-96 and Asn-104 each carry an N-linked (GlcNAc...) asparagine glycan. A glycan (N-linked (GlcNAc...) asparagine) is linked at Asn-181. Zn(2+)-binding residues include His-192, His-215, and His-224. 2 disulfide bridges follow: Cys-258-Cys-261 and Cys-290-Cys-303. N-linked (GlcNAc...) asparagine glycans are attached at residues Asn-304 and Asn-350. Zn(2+)-binding residues include His-377 and His-381. Asn-385 carries an N-linked (GlcNAc...) asparagine glycan. His-404 is a binding site for Zn(2+). The helical transmembrane segment at 478-501 (IITIAVVAALLLVAAIFGVASCLI) threads the bilayer. The Cytoplasmic portion of the chain corresponds to 502-537 (RSRSTKNEANQPLLTDHYQRYAEDYEELPNPNHSMV).

Belongs to the tyrosinase family. In terms of assembly, monomer. Interacts with ATP7A. Interacts with SLC45A2. Cu(2+) is required as a cofactor. Requires Zn(2+) as cofactor. Glycosylated. In terms of tissue distribution, pigment cells.

It is found in the melanosome membrane. The enzyme catalyses 2 5,6-dihydroxyindole-2-carboxylate + O2 = 2 indole-5,6-quinone-2-carboxylate + 2 H2O. Its pathway is pigment biosynthesis; melanin biosynthesis. In terms of biological role, plays a role in melanin biosynthesis. Catalyzes the oxidation of 5,6-dihydroxyindole-2-carboxylic acid (DHICA) into indole-5,6-quinone-2-carboxylic acid. May regulate or influence the type of melanin synthesized. Also to a lower extent, capable of hydroxylating tyrosine and producing melanin. This chain is 5,6-dihydroxyindole-2-carboxylic acid oxidase (Tyrp1), found in Mus musculus (Mouse).